Consider the following 380-residue polypeptide: Alcohol dehydrogenase-like 4 (380 aa).

Residues Cys47, Thr49, His70, Cys100, Cys103, Cys106, Cys114, and Cys180 each contribute to the Zn(2+) site. Thr49 and His70 together coordinate an alcohol. Position 49 (Thr49) interacts with NAD(+). Residues 205-210 (GLGAVG), Asp229, Lys234, 298-300 (LGV), Phe325, and Arg375 contribute to the NAD(+) site.

It belongs to the zinc-containing alcohol dehydrogenase family. Class-III subfamily. In terms of assembly, homodimer. It depends on Zn(2+) as a cofactor.

The protein resides in the cytoplasm. The catalysed reaction is a primary alcohol + NAD(+) = an aldehyde + NADH + H(+). It catalyses the reaction a secondary alcohol + NAD(+) = a ketone + NADH + H(+). This chain is Alcohol dehydrogenase-like 4, found in Arabidopsis thaliana (Mouse-ear cress).